A 1329-amino-acid chain; its full sequence is Putative protein tag-53 (1329 aa).

The EGF-like 1 domain maps to 65–92; the sequence is SCDKPCYNGVCLNKACVCSKGWYGSQCD. Cystine bridges form between cysteine 66–cysteine 75, cysteine 70–cysteine 80, cysteine 82–cysteine 91, cysteine 94–cysteine 120, and cysteine 144–cysteine 166. Residues 94-203 enclose the CUB domain; that stretch reads CFGRIRISDN…NGFNVSYESN (110 aa). Residue asparagine 103 is glycosylated (N-linked (GlcNAc...) asparagine). Residues asparagine 197 and asparagine 208 are each glycosylated (N-linked (GlcNAc...) asparagine). EGF-like domains are found at residues 204–232 and 235–270; these read RCAYNCSNHGSCLNGKCDCEDGYKGLNCE and VCQLSGKSTESPCHEGQCVDGRCECLSARVHGETCQ. Intrachain disulfides connect cysteine 205–cysteine 215, cysteine 209–cysteine 220, cysteine 222–cysteine 231, cysteine 236–cysteine 252, cysteine 247–cysteine 257, and cysteine 259–cysteine 269. 6 Kelch repeats span residues 302 to 353, 355 to 408, 416 to 463, 471 to 518, 520 to 575, and 577 to 619; these read VVWS…KYKN, LYMF…VAGH, EMFV…AVEY, AILV…YLNG, MVVV…VIGQ, and LYAL…KCVF. 6 N-linked (GlcNAc...) asparagine glycosylation sites follow: asparagine 324, asparagine 395, asparagine 447, asparagine 481, asparagine 529, and asparagine 555. A glycan (N-linked (GlcNAc...) asparagine) is linked at asparagine 820. N-linked (GlcNAc...) asparagine; atypical glycosylation is present at asparagine 832. N-linked (GlcNAc...) asparagine glycans are attached at residues asparagine 833 and asparagine 934. Cystine bridges form between cysteine 945-cysteine 953, cysteine 947-cysteine 968, cysteine 971-cysteine 980, cysteine 983-cysteine 997, cysteine 1000-cysteine 1009, cysteine 1002-cysteine 1016, cysteine 1018-cysteine 1028, and cysteine 1031-cysteine 1045. Laminin EGF-like domains follow at residues 945-999 and 1000-1047; these read CQCN…VCSP and CDCH…PCFY. The EGF-like 4 domain maps to 952–998; sequence TCFTSVGSFPPVTIEKCQSCQNHTTGAHCERCAPGFYGDARNGGVCS. N-linked (GlcNAc...) asparagine glycosylation occurs at asparagine 973. Asparagine 1066, asparagine 1102, and asparagine 1147 each carry an N-linked (GlcNAc...) asparagine glycan. A helical membrane pass occupies residues 1176 to 1196; it reads VLFFVIFAACFIVLLVVAGLL. The Cytoplasmic portion of the chain corresponds to 1197–1329; the sequence is WMIKVRIEAY…TIRQRPNNND (133 aa).

The protein resides in the membrane. The sequence is that of Putative protein tag-53 (tag-53) from Caenorhabditis elegans.